The primary structure comprises 422 residues: Glucuronoxylanase XynC (422 aa).

A signal peptide spans 1–32 (MIPRIKKTICVLLVCFTMLSVMLGPGATEVLA). Glutamate 171 (proton donor) is an active-site residue. The active-site Nucleophile is glutamate 260.

This sequence belongs to the glycosyl hydrolase 30 family.

It localises to the secreted. The catalysed reaction is Endohydrolysis of (1-&gt;4)-beta-D-xylosyl links in some glucuronoarabinoxylans.. The protein operates within glycan degradation; xylan degradation. In terms of biological role, catalyzes the depolymerization of methylglucuronoxylan (MeGAXn) from different sources. It cleaves the beta-1,4-xylosidic bond penultimate to that linking carbon one of the xylose residue substituted with alpha-1,2-linked 4-O-methyl-D-glucuronate (MeGA). The polypeptide is Glucuronoxylanase XynC (xynC) (Bacillus subtilis (strain 168)).